The following is a 391-amino-acid chain: Phosphoglycerate kinase (391 aa).

Substrate contacts are provided by residues 21 to 23 (DLN), arginine 36, 59 to 62 (HLGR), arginine 113, and arginine 146. Residues lysine 197, glutamate 319, and 345-348 (GGDT) each bind ATP.

Belongs to the phosphoglycerate kinase family. As to quaternary structure, monomer.

It localises to the cytoplasm. It catalyses the reaction (2R)-3-phosphoglycerate + ATP = (2R)-3-phospho-glyceroyl phosphate + ADP. Its pathway is carbohydrate degradation; glycolysis; pyruvate from D-glyceraldehyde 3-phosphate: step 2/5. In Xylella fastidiosa (strain 9a5c), this protein is Phosphoglycerate kinase.